We begin with the raw amino-acid sequence, 651 residues long: MFAARFDPTKVVREEPKIIPQKRAIPDDVESSDSDQDIEDGVEVGAVSKEQSGTDVTTTRAVDGKSESDSESESESESDSDDEMNFDMGGSSSSSDDDEVSSKDADVDDDGKHTSVLSRFKKTLSIQDKISALEEANTQDILEDGEAHDLAQIPQPAVVRDKKLQVKDISEMKNTAFRDTRKVHYDNSMTKSFEEYSDDLTPKLLNNIEKYFSKSTFPIQTAMLDQYLKLINFTLKTSKKNFTRRIGDILVNASTGSGKTLAYSIPIIQTLSSRTVNKLRVLIILPTKLLINQVFQTMSQLAEGTSLVITVSKLENSFNEEHKRLLKTEPDIFITTPGRLVDHLTNSSISLRNLKFLVLDEADRLLNQSFQNWIPEVMSKFKSDKFDQMPGSIIKMVFSATLTTNTEKLNDLQLYNPTLFATDSVKLYNLPPTLQEYQLQIPSAKSVYKPLYLLKLLEQLSGGKTLVFVRSNESSLKLEVLLKSLIKGHMTTLQIVVHSINSNNSKAENRRLVTDFTKESLPNQTNVLITTDLMSRGIDIENIANVINYDVPISSQQYVHRCGRTARANKDGKAYNMLVGKGEAQFWKDSIDEDISRDVSGCKPISYNDSYNKVHGDENARTSEPTRDLFTSIDSETSDKYNEILKNLTQK.

The segment at 1-114 (MFAARFDPTK…ADVDDDGKHT (114 aa)) is disordered. Residues 7 to 17 (DPTKVVREEPK) are compositionally biased toward basic and acidic residues. Acidic residues predominate over residues 27–42 (DDVESSDSDQDIEDGV). Residues 49–60 (KEQSGTDVTTTR) show a composition bias toward polar residues. Over residues 69–85 (DSESESESESDSDDEMN) the composition is skewed to acidic residues. Over residues 100–113 (VSSKDADVDDDGKH) the composition is skewed to basic and acidic residues. The Q motif motif lies at 216-224 (TFPIQTAML). The Helicase ATP-binding domain occupies 240-420 (KNFTRRIGDI…DLQLYNPTLF (181 aa)). An ATP-binding site is contributed by 253-260 (ASTGSGKT). The short motif at 360–363 (DEAD) is the DEAD box element. The 160-residue stretch at 452–611 (YLLKLLEQLS…CKPISYNDSY (160 aa)) folds into the Helicase C-terminal domain.

The protein belongs to the DEAD box helicase family. DDX51/DBP6 subfamily. As to quaternary structure, associated with pre-ribosomal particles.

It is found in the nucleus. Its subcellular location is the nucleolus. The enzyme catalyses ATP + H2O = ADP + phosphate + H(+). Its function is as follows. ATP-binding RNA helicase involved in the biogenesis of 60S ribosomal subunits and is required for the normal formation of 25S and 5.8S rRNAs. The sequence is that of ATP-dependent RNA helicase DBP6 (DBP6) from Candida glabrata (strain ATCC 2001 / BCRC 20586 / JCM 3761 / NBRC 0622 / NRRL Y-65 / CBS 138) (Yeast).